The primary structure comprises 94 residues: Co-chaperonin GroES (94 aa).

The protein belongs to the GroES chaperonin family. In terms of assembly, heptamer of 7 subunits arranged in a ring. Interacts with the chaperonin GroEL.

The protein localises to the cytoplasm. Functionally, together with the chaperonin GroEL, plays an essential role in assisting protein folding. The GroEL-GroES system forms a nano-cage that allows encapsulation of the non-native substrate proteins and provides a physical environment optimized to promote and accelerate protein folding. GroES binds to the apical surface of the GroEL ring, thereby capping the opening of the GroEL channel. The sequence is that of Co-chaperonin GroES from Brevibacillus brevis (strain 47 / JCM 6285 / NBRC 100599).